Reading from the N-terminus, the 84-residue chain is Large ribosomal subunit protein bL27 (84 aa).

The segment at 1–21 (MATKKAGGSSRNGRDSAGRRL) is disordered.

The protein belongs to the bacterial ribosomal protein bL27 family.

The sequence is that of Large ribosomal subunit protein bL27 from Pelagibacter ubique (strain HTCC1062).